The chain runs to 633 residues: Early transcription factor 70 kDa subunit (633 aa).

In terms of domain architecture, Helicase ATP-binding spans 32–185 (RTILDHNESV…SNIISIMSDE (154 aa)). ATP is bound at residue 45 to 52 (HIMGSGKT). The DEXH box signature appears at 135–138 (DEAH). In terms of domain architecture, Helicase C-terminal spans 326 to 505 (KFKYFIDTIG…TLPFDIKKLL (180 aa)).

Belongs to the helicase family. VETF subfamily. In terms of assembly, heterodimer of a 70 kDa and a 82 kDa subunit. Part of the early transcription complex composed of ETF, RAP94, and the DNA-directed RNA polymerase.

Its subcellular location is the virion. In terms of biological role, acts with RNA polymerase to initiate transcription from early gene promoters. Is recruited by the RPO-associated protein of 94 kDa (RAP94) to form the early transcription complex, which also contains the core RNA polymerase. ETF heterodimer binds to early gene promoters. This is Early transcription factor 70 kDa subunit (VETFS) from Vertebrata (FPV).